Here is a 388-residue protein sequence, read N- to C-terminus: Single-stranded DNA-binding protein 3 (388 aa).

Met1 is subject to N-acetylmethionine. In terms of domain architecture, LisH spans 16–48; the sequence is AREKLALYVYEYLLHVGAQKSAQTFLSEIRWEK. A disordered region spans residues 101 to 388; it reads VLGNIPPNDG…NYSPSMTMSV (288 aa). Residues 126–139 are compositionally biased toward pro residues; the sequence is GSQPSPHAQPPPHN. 3 positions are modified to asymmetric dimethylarginine: Arg155, Arg161, and Arg165. Low complexity-rich tracts occupy residues 200-209 and 250-268; these read MQRMNPPRGM and PNSANSIPYSSSSPGTYVG. The span at 272-282 shows a compositional bias: pro residues; the sequence is GGGPPGTPIMP. A compositionally biased stretch (polar residues) spans 285 to 296; it reads ADSTNSSDNIYT. Over residues 315–325 the composition is skewed to gly residues; the sequence is GSDGPMGGMGG. Positions 346 to 357 are enriched in low complexity; sequence NSPNNISGISNP. Phosphoserine is present on residues Ser347, Ser352, and Ser355. Thr360 carries the post-translational modification Phosphothreonine. A compositionally biased stretch (polar residues) spans 373–388; the sequence is HSFQNDNYSPSMTMSV. Phosphoserine occurs at positions 381 and 387.

Highly expressed in all hematopoietic tissues, including spleen, lymph node, peripheral blood, bone marrow, thymus, and fetal liver, with highest expression in thymus and fetal liver. Expression is also high in heart, brain, kidney, and skeletal muscle.

Its subcellular location is the nucleus. May be involved in transcription regulation of the alpha 2(I) collagen gene where it binds to the single-stranded polypyrimidine sequences in the promoter region. The sequence is that of Single-stranded DNA-binding protein 3 (SSBP3) from Homo sapiens (Human).